The primary structure comprises 130 residues: Glycine cleavage system H protein (130 aa).

In terms of domain architecture, Lipoyl-binding spans 22–103 (KAYIGISDCA…PYGSWIAAIE (82 aa)). Lys63 bears the N6-lipoyllysine mark.

This sequence belongs to the GcvH family. The glycine cleavage system is composed of four proteins: P, T, L and H. It depends on (R)-lipoate as a cofactor.

Its function is as follows. The glycine cleavage system catalyzes the degradation of glycine. The H protein shuttles the methylamine group of glycine from the P protein to the T protein. This Clostridium botulinum (strain ATCC 19397 / Type A) protein is Glycine cleavage system H protein.